Reading from the N-terminus, the 719-residue chain is Probable phosphatidylinositol phosphate kinase DDB_G0267588 (719 aa).

The disordered stretch occupies residues 47–261 (VFSPIPPPPS…SDSPNRVRLN (215 aa)). Composition is skewed to low complexity over residues 57–77 (TTDNTTNTTTTTIETTATDNT) and 87–104 (IENNNNNNNSSISSPNSI). Basic and acidic residues predominate over residues 107 to 129 (ANKKDSIELEEDKEHSIKRKDGS). The segment covering 172–184 (FDATNDNHNPQEV) has biased composition (polar residues). The segment covering 199 to 217 (TTTTTTTTTTTTSTNSTSN) has biased composition (low complexity). 2 stretches are compositionally biased toward polar residues: residues 218–228 (KLPNNGDNTVS) and 248–261 (ASGSSDSPNRVRLN). A Phosphothreonine modification is found at Thr262. A PIPK domain is found at 316-718 (NAVGKSMGTE…RFQEFLSTII (403 aa)). Residues 579–638 (RENEPPSPSLLRSTLEDSSDFESPSMEQSSAGQQQQQRGSGNYDNSGAGRDSTTGGAAPK) are disordered. A compositionally biased stretch (low complexity) spans 606–619 (QSSAGQQQQQRGSG).

Post-translationally, phosphorylated at Thr-262 by pkgB.

In terms of biological role, may be involved in signaling events that underlie chemotaxis via the chemoattractant-mediated pkgB phosphorylation. This Dictyostelium discoideum (Social amoeba) protein is Probable phosphatidylinositol phosphate kinase DDB_G0267588.